Reading from the N-terminus, the 239-residue chain is Tetraspanin-9 (239 aa).

At Met-1–Met-13 the chain is on the cytoplasmic side. The chain crosses the membrane as a helical span at residues Phe-14–Leu-34. Residues Ser-35–Asn-55 are Extracellular-facing. The chain crosses the membrane as a helical span at residues Leu-56–Ile-76. Topologically, residues Lys-77–Ser-85 are cytoplasmic. A helical transmembrane segment spans residues Phe-86–Val-106. Topologically, residues Tyr-107–His-203 are extracellular. Asn-180 is a glycosylation site (N-linked (GlcNAc...) asparagine). Residues Val-204–Met-224 form a helical membrane-spanning segment. Residues Thr-225–Ala-239 are Cytoplasmic-facing.

Belongs to the tetraspanin (TM4SF) family.

It is found in the membrane. The polypeptide is Tetraspanin-9 (tspan9) (Xenopus tropicalis (Western clawed frog)).